The following is a 225-amino-acid chain: Small ribosomal subunit protein uS3 (225 aa).

One can recognise a KH type-2 domain in the interval 39 to 109; the sequence is IYRFFNKFTR…ELKLNIEVVN (71 aa).

This sequence belongs to the universal ribosomal protein uS3 family. As to quaternary structure, part of the 30S ribosomal subunit. Forms a tight complex with proteins S10 and S14.

Its function is as follows. Binds the lower part of the 30S subunit head. Binds mRNA in the 70S ribosome, positioning it for translation. This Mycoplasma mobile (strain ATCC 43663 / 163K / NCTC 11711) (Mesomycoplasma mobile) protein is Small ribosomal subunit protein uS3.